The sequence spans 49 residues: Lysozyme C (49 aa).

The C-type lysozyme domain occupies 1-49 (SKMKKCEFAKIAKEQHMDGYHGVSLADWVCLVNNESDFNTKAINRNKGI). Residue Glu35 is part of the active site.

This sequence belongs to the glycosyl hydrolase 22 family. In terms of assembly, monomer.

The protein localises to the secreted. It carries out the reaction Hydrolysis of (1-&gt;4)-beta-linkages between N-acetylmuramic acid and N-acetyl-D-glucosamine residues in a peptidoglycan and between N-acetyl-D-glucosamine residues in chitodextrins.. In terms of biological role, lysozymes have primarily a bacteriolytic function; those in tissues and body fluids are associated with the monocyte-macrophage system and enhance the activity of immunoagents. The polypeptide is Lysozyme C (LYZ) (Pseudocheirus peregrinus (Common ring-tailed possum)).